The primary structure comprises 175 residues: UPF0398 protein SPH_0478 (175 aa).

Belongs to the UPF0398 family.

This Streptococcus pneumoniae (strain Hungary19A-6) protein is UPF0398 protein SPH_0478.